We begin with the raw amino-acid sequence, 287 residues long: MNTVKTVRELRAAVARARGEGKRIAFVPTMGNLHSGHAALVTKAAQRADFVVASIFVNPLQFGAGEDLDKYPRTLAADQEKLLQAGCHLLFAPTVEEMYPDGMAVQTRVSVPQLSEGLCGASRPGHFEGVATVVSKLFNMVQPDLAVFGEKDFQQLAVIRAMVRDLNMPIQIIGEPTVRAEDGLALSSRNGYLSPEQRAAAPALYRTLNGMAEAIRRGQRDFSALVADGQAQLDAAGFRKDYLEVRHALTLRPAQVDDRDLVVIAAAYMGSTRLIDNLYLHLEEQTA.

30-37 (MGNLHSGH) is a binding site for ATP. Residue H37 is the Proton donor of the active site. Q61 is a binding site for (R)-pantoate. Q61 is a beta-alanine binding site. Position 149–152 (149–152 (GEKD)) interacts with ATP. A (R)-pantoate-binding site is contributed by Q155. ATP contacts are provided by residues V178 and 186 to 189 (LSSR).

It belongs to the pantothenate synthetase family. Homodimer.

It is found in the cytoplasm. It catalyses the reaction (R)-pantoate + beta-alanine + ATP = (R)-pantothenate + AMP + diphosphate + H(+). It participates in cofactor biosynthesis; (R)-pantothenate biosynthesis; (R)-pantothenate from (R)-pantoate and beta-alanine: step 1/1. In terms of biological role, catalyzes the condensation of pantoate with beta-alanine in an ATP-dependent reaction via a pantoyl-adenylate intermediate. The sequence is that of Pantothenate synthetase from Pseudomonas entomophila (strain L48).